A 323-amino-acid chain; its full sequence is Peroxisomal targeting signal 2 receptor (323 aa).

6 WD repeats span residues 65-96, 109-141, 153-184, 196-227, 240-271, and 284-315; these read DWND…QLWD, EHAQ…KLWD, GHES…RIWD, AHQA…RGWD, GHTY…RFWN, and HHTE…KIYD.

It belongs to the WD repeat peroxin-7 family. In terms of assembly, interacts with PEX5; interaction only takes place when PEX7 is associated with cargo proteins. Interacts with VWA8. Ubiquitous. Highest expression in pancreas, skeletal muscle and heart.

Its subcellular location is the cytoplasm. It localises to the cytosol. The protein localises to the peroxisome matrix. Functionally, receptor required for the peroxisomal import of proteins containing a C-terminal PTS2-type peroxisomal targeting signal. Specifically binds to cargo proteins containing a PTS2 peroxisomal targeting signal in the cytosol. Cargo protein-binding triggers interaction with PEX5 and formation of a ternary complex composed of PEX5 and PEX7 along with PTS2-containing cargo proteins, which is tranlocated into peroxisomes by passing through the PEX13-PEX14 docking complex. This Homo sapiens (Human) protein is Peroxisomal targeting signal 2 receptor.